Reading from the N-terminus, the 770-residue chain is 1,4-alpha-glucan branching enzyme GlgB (770 aa).

The active-site Nucleophile is the Asp-437. Glu-488 acts as the Proton donor in catalysis.

It belongs to the glycosyl hydrolase 13 family. GlgB subfamily. Monomer.

It catalyses the reaction Transfers a segment of a (1-&gt;4)-alpha-D-glucan chain to a primary hydroxy group in a similar glucan chain.. It participates in glycan biosynthesis; glycogen biosynthesis. Its function is as follows. Catalyzes the formation of the alpha-1,6-glucosidic linkages in glycogen by scission of a 1,4-alpha-linked oligosaccharide from growing alpha-1,4-glucan chains and the subsequent attachment of the oligosaccharide to the alpha-1,6 position. The sequence is that of 1,4-alpha-glucan branching enzyme GlgB from Synechococcus sp. (strain JA-3-3Ab) (Cyanobacteria bacterium Yellowstone A-Prime).